Reading from the N-terminus, the 186-residue chain is Ribosome-recycling factor (186 aa).

Belongs to the RRF family.

Its subcellular location is the cytoplasm. Responsible for the release of ribosomes from messenger RNA at the termination of protein biosynthesis. May increase the efficiency of translation by recycling ribosomes from one round of translation to another. This is Ribosome-recycling factor from Rhodopseudomonas palustris (strain ATCC BAA-98 / CGA009).